A 310-amino-acid chain; its full sequence is Proline-rich 28 kDa antigen (310 aa).

The signal sequence occupies residues 1-32 (MIQIARTWRVFAGGMATGFIGVVLVTAGKASA). The interval 278–310 (QAPAPAPGSAPVGLPGQAPGYPPAGTLTPVPPR) is disordered.

It to M.leprae ML0031.

The chain is Proline-rich 28 kDa antigen (mtc28) from Mycobacterium bovis (strain ATCC BAA-935 / AF2122/97).